The sequence spans 95 residues: Pyrimidine/purine nucleoside phosphorylase (95 aa).

It belongs to the nucleoside phosphorylase PpnP family.

It carries out the reaction a purine D-ribonucleoside + phosphate = a purine nucleobase + alpha-D-ribose 1-phosphate. The enzyme catalyses adenosine + phosphate = alpha-D-ribose 1-phosphate + adenine. The catalysed reaction is cytidine + phosphate = cytosine + alpha-D-ribose 1-phosphate. It catalyses the reaction guanosine + phosphate = alpha-D-ribose 1-phosphate + guanine. It carries out the reaction inosine + phosphate = alpha-D-ribose 1-phosphate + hypoxanthine. The enzyme catalyses thymidine + phosphate = 2-deoxy-alpha-D-ribose 1-phosphate + thymine. The catalysed reaction is uridine + phosphate = alpha-D-ribose 1-phosphate + uracil. It catalyses the reaction xanthosine + phosphate = alpha-D-ribose 1-phosphate + xanthine. Functionally, catalyzes the phosphorolysis of diverse nucleosides, yielding D-ribose 1-phosphate and the respective free bases. Can use uridine, adenosine, guanosine, cytidine, thymidine, inosine and xanthosine as substrates. Also catalyzes the reverse reactions. The protein is Pyrimidine/purine nucleoside phosphorylase of Enterobacter sp. (strain 638).